Reading from the N-terminus, the 316-residue chain is MQILLANPRGFCAGVDRAISIVENALAIYGAPIYVRHEVVHNRYVVDSLRERGAIFIEQISEVPDGAILIFSAHGVSQAVRNEAKSRDLTVFDATCPLVTKVHMEVARASRRGEESILIGHAGHPEVEGTMGQYSNPEGGMYLVESPDDVWKLTVKNEEKLSFMTQTTLSVDDTSDVIDALRKRFPKIVGPRKDDICYATTNRQEAVRALAEQAEVVLVVGSKNSSNSNRLAELAQRMGKSAFLIDDAKDIQEEWVKEVKCVGVTAGASAPDILVQNVVARLQQLGGGEAIPLEGREENIVFEVPKELRVDIREVD.

Cysteine 12 serves as a coordination point for [4Fe-4S] cluster. Positions 41 and 74 each coordinate (2E)-4-hydroxy-3-methylbut-2-enyl diphosphate. 2 residues coordinate dimethylallyl diphosphate: histidine 41 and histidine 74. Histidine 41 and histidine 74 together coordinate isopentenyl diphosphate. Position 96 (cysteine 96) interacts with [4Fe-4S] cluster. Residue histidine 124 participates in (2E)-4-hydroxy-3-methylbut-2-enyl diphosphate binding. Residue histidine 124 coordinates dimethylallyl diphosphate. Histidine 124 is an isopentenyl diphosphate binding site. Glutamate 126 acts as the Proton donor in catalysis. Threonine 167 is a (2E)-4-hydroxy-3-methylbut-2-enyl diphosphate binding site. A [4Fe-4S] cluster-binding site is contributed by cysteine 197. Positions 225, 226, 227, and 269 each coordinate (2E)-4-hydroxy-3-methylbut-2-enyl diphosphate. Dimethylallyl diphosphate is bound by residues serine 225, serine 226, asparagine 227, and serine 269. 4 residues coordinate isopentenyl diphosphate: serine 225, serine 226, asparagine 227, and serine 269.

Belongs to the IspH family. As to quaternary structure, homodimer. [4Fe-4S] cluster is required as a cofactor.

The enzyme catalyses isopentenyl diphosphate + 2 oxidized [2Fe-2S]-[ferredoxin] + H2O = (2E)-4-hydroxy-3-methylbut-2-enyl diphosphate + 2 reduced [2Fe-2S]-[ferredoxin] + 2 H(+). It catalyses the reaction dimethylallyl diphosphate + 2 oxidized [2Fe-2S]-[ferredoxin] + H2O = (2E)-4-hydroxy-3-methylbut-2-enyl diphosphate + 2 reduced [2Fe-2S]-[ferredoxin] + 2 H(+). It functions in the pathway isoprenoid biosynthesis; dimethylallyl diphosphate biosynthesis; dimethylallyl diphosphate from (2E)-4-hydroxy-3-methylbutenyl diphosphate: step 1/1. Its pathway is isoprenoid biosynthesis; isopentenyl diphosphate biosynthesis via DXP pathway; isopentenyl diphosphate from 1-deoxy-D-xylulose 5-phosphate: step 6/6. In terms of biological role, catalyzes the conversion of 1-hydroxy-2-methyl-2-(E)-butenyl 4-diphosphate (HMBPP) into a mixture of isopentenyl diphosphate (IPP) and dimethylallyl diphosphate (DMAPP). Acts in the terminal step of the DOXP/MEP pathway for isoprenoid precursor biosynthesis. The protein is 4-hydroxy-3-methylbut-2-enyl diphosphate reductase of Escherichia coli (strain ATCC 8739 / DSM 1576 / NBRC 3972 / NCIMB 8545 / WDCM 00012 / Crooks).